A 149-amino-acid chain; its full sequence is Large ribosomal subunit protein uL24 (149 aa).

This sequence belongs to the universal ribosomal protein uL24 family. In terms of assembly, part of the 50S ribosomal subunit.

Its function is as follows. One of two assembly initiator proteins, it binds directly to the 5'-end of the 23S rRNA, where it nucleates assembly of the 50S subunit. In terms of biological role, located at the polypeptide exit tunnel on the outside of the subunit. This Hyperthermus butylicus (strain DSM 5456 / JCM 9403 / PLM1-5) protein is Large ribosomal subunit protein uL24.